The following is a 228-amino-acid chain: Cytidylate kinase (228 aa).

An ATP-binding site is contributed by 10-18 (GPSGSGKGT).

The protein belongs to the cytidylate kinase family. Type 1 subfamily.

It localises to the cytoplasm. The catalysed reaction is CMP + ATP = CDP + ADP. It carries out the reaction dCMP + ATP = dCDP + ADP. The protein is Cytidylate kinase of Acinetobacter baumannii (strain AB0057).